Consider the following 83-residue polypeptide: MSGNTGERSFADIITSIRYWVIHSITIPSLFIAGWLFVSTGLAYDVFGSPRPNEYFTESRQGIPLITGRFDSLEQLNEFSRSF.

A helical membrane pass occupies residues 21–35 (VIHSITIPSLFIAGW). Position 23 (H23) interacts with heme.

The protein belongs to the PsbE/PsbF family. In terms of assembly, heterodimer of an alpha subunit and a beta subunit. PSII is composed of 1 copy each of membrane proteins PsbA, PsbB, PsbC, PsbD, PsbE, PsbF, PsbH, PsbI, PsbJ, PsbK, PsbL, PsbM, PsbT, PsbX, PsbY, PsbZ, Psb30/Ycf12, at least 3 peripheral proteins of the oxygen-evolving complex and a large number of cofactors. It forms dimeric complexes. Heme b serves as cofactor.

It localises to the plastid membrane. This b-type cytochrome is tightly associated with the reaction center of photosystem II (PSII). PSII is a light-driven water:plastoquinone oxidoreductase that uses light energy to abstract electrons from H(2)O, generating O(2) and a proton gradient subsequently used for ATP formation. It consists of a core antenna complex that captures photons, and an electron transfer chain that converts photonic excitation into a charge separation. This Cuscuta reflexa (Southern Asian dodder) protein is Cytochrome b559 subunit alpha.